The sequence spans 20 residues: ITXGQVTGSLAPXIAFLRTK.

This sequence belongs to the plant LTP family.

Functionally, plant non-specific lipid-transfer proteins transfer phospholipids as well as galactolipids across membranes. May play a role in wax or cutin deposition in the cell walls of expanding epidermal cells and certain secretory tissues. The chain is Non-specific lipid-transfer protein from Citrus sinensis (Sweet orange).